A 907-amino-acid polypeptide reads, in one-letter code: Sensor protein GacS (907 aa).

3 helical membrane-spanning segments follow: residues 9-25, 84-101, and 159-178; these read ASLM…WMQL, VLAH…IGSG, and LFAS…TLAV. Positions 182–234 constitute an HAMP domain; sequence RTINGPMSQIKQAVSQLKDGNLETRLPPLGSRELDELASGINRMAATLQNAQE. One can recognise a Histidine kinase domain in the interval 281 to 502; it reads NMSHEIRTPL…EFWISLKLPK (222 aa). A Phosphohistidine; by autocatalysis modification is found at histidine 284. The Response regulatory domain maps to 658–777; that stretch reads RVLCVDDNPA…QLAQVVLKWT (120 aa). A 4-aspartylphosphate modification is found at aspartate 707. Positions 814 to 907 constitute an HPt domain; the sequence is KADLAADMLA…RLEAEARVMA (94 aa). Histidine 853 is modified (phosphohistidine).

In terms of processing, activation requires a sequential transfer of a phosphate group from a His in the primary transmitter domain, to an Asp in the receiver domain and to a His in the secondary transmitter domain.

It localises to the cell inner membrane. It carries out the reaction ATP + protein L-histidine = ADP + protein N-phospho-L-histidine.. In terms of biological role, forms part of a two-component regulatory system GacA/GacS(LemA). May be involved in lesion formation, swarming and in the production of extracellular protease, syringomycin and N-acyl-L-homoserine lactone (acyl-HSL). Required for pathogenicity on bean. The protein is Sensor protein GacS (gacS) of Pseudomonas syringae pv. syringae.